The sequence spans 413 residues: MPSSISWGLLLLAALSCLGPGSLAQDAQETEASKQDQEHPASHRIAPHLAEFALSLYRVLARQSNTTNIFFSPVSIASALAMLSLGTKGDTHTQILEGLDFNLTEMAEADIHQGFQNLLQTLNRPNTQLQLTSGNVLFIHQNLKLLDKFLENIKSLYHSGAFPTNFTNTEEARQQINSYVEQGTQGKIVELVKELDRDTVLALVNYIFFKGKWLKPFNVKNIREEDFHVDEATTVRVPMMYRVGMFPVHYCRTLASLVLQMDYLGNATAIFLLPDKGKMQHLEDTISTEILSKLLKDRQTSKYQVYFPRVSISGTYDLKDVLSSLGITRVFSRVADLSGVTEDAPLTVSKVLHKAVLDMDEEGTEAAGGTVLGAEAMLQAPIMKFDRPFLVVIYEHNTKSPLFVGKVVNPTQQ.

Residues 1–24 (MPSSISWGLLLLAALSCLGPGSLA) form the signal peptide. The residue at position 25 (Q25) is a Pyrrolidone carboxylic acid. Residues N65, N102, N165, and N266 are each glycosylated (N-linked (GlcNAc...) asparagine). The tract at residues 368–387 (GGTVLGAEAMLQAPIMKFDR) is RCL.

It belongs to the serpin family. In terms of assembly, plasma proteins HP-20, HP-25, HP-27 and HP-55 form a 140 kDa complex via disulfide bonds in the plasma. The N-terminus is blocked. As to expression, plasma; synthesized in the liver.

The protein localises to the secreted. In terms of biological role, protease inhibitor. The protein is Hibernation-specific plasma protein HP-55 of Tamias sibiricus (Siberian chipmunk).